The following is a 464-amino-acid chain: Cysteine--tRNA ligase (464 aa).

C28 provides a ligand contact to Zn(2+). The 'HIGH' region motif lies at 30–40 (ITAYDFCHIGH). 3 residues coordinate Zn(2+): C210, H235, and E239. A 'KMSKS' region motif is present at residues 267-271 (KMSKS). Position 270 (K270) interacts with ATP.

This sequence belongs to the class-I aminoacyl-tRNA synthetase family. As to quaternary structure, monomer. Zn(2+) serves as cofactor.

Its subcellular location is the cytoplasm. The enzyme catalyses tRNA(Cys) + L-cysteine + ATP = L-cysteinyl-tRNA(Cys) + AMP + diphosphate. The sequence is that of Cysteine--tRNA ligase from Buchnera aphidicola subsp. Baizongia pistaciae (strain Bp).